The primary structure comprises 1572 residues: Dynein axonemal assembly factor 8 (1572 aa).

4 disordered regions span residues 1-21, 262-304, 324-428, and 849-871; these read MASE…NWSG, SEEV…HPQS, SLEQ…EILQ, and FQNP…SDSE. A compositionally biased stretch (polar residues) spans 324–335; the sequence is SLEQNPENPSQR. Residues 336–351 show a composition bias toward basic and acidic residues; sequence NEQKEKHHLNKTDHTG. Over residues 361 to 374 the composition is skewed to polar residues; the sequence is NIQNDSLSDANMSN. The segment covering 409–426 has biased composition (basic and acidic residues); the sequence is VGREEKDGREEQEKEKEI. Residues 849 to 865 show a composition bias toward polar residues; sequence FQNPYSRSTQPRSANLR. The interval 1249–1382 is NDK; sequence TVLLLKPRIW…IRDIKTFFPE (134 aa).

Interacts with DNAI2. Expression is enriched in multiciliated cells in the epidermis and the nephrostomes of the pronephros.

Its subcellular location is the dynein axonemal particle. The protein resides in the cytoplasm. Functionally, in cyliated cells, dynein axonemal particle-specific protein required for deployment of ODA to the axoneme. Interacts with outer dynein arm (ODA) subunits. The polypeptide is Dynein axonemal assembly factor 8 (dnaaf8) (Xenopus laevis (African clawed frog)).